The chain runs to 145 residues: Trafficking protein particle complex subunit 1 (145 aa).

It belongs to the TRAPP small subunits family. BET5 subfamily. In terms of assembly, part of the multisubunit transport protein particle (TRAPP) complex. The heterodimer TRAPPC6B-TRAPPC3 interacts with TRAPPC1 likely providing a core for TRAPP complex formation.

It localises to the golgi apparatus. Its subcellular location is the cis-Golgi network. The protein localises to the endoplasmic reticulum. May play a role in vesicular transport from endoplasmic reticulum to Golgi. The polypeptide is Trafficking protein particle complex subunit 1 (Mus musculus (Mouse)).